A 406-amino-acid polypeptide reads, in one-letter code: Protein transport protein HofC homolog (406 aa).

Transmembrane regions (helical) follow at residues 167–187, 214–234, and 379–399; these read MVLGISLLLTLALLLFIVPQF, QNIGILLFFVLSFFLFYYFYL, and MMVIIGSLIGIIMMGMYLPIF.

The protein belongs to the GSP F family.

It is found in the cell inner membrane. The protein is Protein transport protein HofC homolog (hofC) of Haemophilus influenzae (strain ATCC 51907 / DSM 11121 / KW20 / Rd).